Reading from the N-terminus, the 458-residue chain is Histone acetyltransferase KAT8 (458 aa).

Composition is skewed to low complexity over residues 1-17 (MAAQ…TSGT) and 25-35 (PGENAAVEGPA). The interval 1-52 (MAAQGATAAVAATTSGTVGEGEPGPGENAAVEGPARSPGRVSPPTPARGEPE) is disordered. The residue at position 2 (Ala2) is an N-acetylalanine. 2 positions are modified to phosphoserine: Ser37 and Ser42. A Tudor-knot domain is found at 55–110 (VEIGETYLCRRPDSTWHSAEVIQSRVNDQEGREEFYVHYVGFNRRLDEWVDKNRLA). N6-acetyllysine is present on Lys113. The Nuclear localization signal motif lies at 140–149 (RNQKRKHDEI). The MYST-type HAT domain maps to 174 to 447 (TKVKYVDKIH…VDSVCLKWAP (274 aa)). The tract at residues 174 to 458 (TKVKYVDKIH…KHKQVKLSKK (285 aa)) is sufficient for interaction with KANSL1. A C2HC MYST-type zinc finger spans residues 207-232 (LWLCEYCLKYMKFEKSYRFHLGQCQW). Zn(2+) is bound by residues Cys210, Cys213, His226, and Cys230. Residue Lys274 is modified to N6-acetyllysine. Positions 317, 319, 325, 326, 327, 329, and 330 each coordinate acetyl-CoA. Phosphoserine is present on Ser348. Glu350 functions as the Proton donor/acceptor in the catalytic mechanism. Residues Ser354, Ser363, Tyr408, and Lys432 each contribute to the acetyl-CoA site.

It belongs to the MYST (SAS/MOZ) family. Component of a multisubunit histone acetyltransferase complex (MSL) at least composed of the MOF/KAT8, MSL1/hampin, MSL2L1 and MSL3L1. Component of the NSL complex at least composed of MOF/KAT8, KANSL1, KANSL2, KANSL3, MCRS1, PHF20, OGT1/OGT, WDR5 and HCFC1. Component of some MLL1/MLL complex, at least composed of the core components KMT2A/MLL1, ASH2L, HCFC1, WDR5 and RBBP5, as well as the facultative components BACC1, CHD8, E2F6, HSP70, INO80C, KANSL1, LAS1L, MAX, MCRS1, MGA, MOF/KAT8, PELP1, PHF20, PRP31, RING2, RUVB1/TIP49A, RUVB2/TIP49B, SENP3, TAF1, TAF4, TAF6, TAF7, TAF9 and TEX10. Interacts with the chromodomain of MORF4L1/MRG15. Interacts with ATM (via its Tudor-knot domain); possibly regulating the activity of ATM. Interacts with NELFD. Post-translationally, acetylation at Lys-274 facilitates cognate substrate Lys-binding and acetylation. Although considered as an autoacetylation event, acetylation at Lys-274 probably takes place via a non-enzymatic process following acetyl-CoA-binding, which primes KAT8 for cognate protein-lysine acetylation. During oocyte development, expressed in both oocytes and granulosa cells.

Its subcellular location is the nucleus. The protein resides in the chromosome. It localises to the mitochondrion. It carries out the reaction L-lysyl-[histone] + acetyl-CoA = N(6)-acetyl-L-lysyl-[histone] + CoA + H(+). The catalysed reaction is L-lysyl-[protein] + acetyl-CoA = N(6)-acetyl-L-lysyl-[protein] + CoA + H(+). The enzyme catalyses propanoyl-CoA + L-lysyl-[protein] = N(6)-propanoyl-L-lysyl-[protein] + CoA + H(+). Its activity is regulated as follows. The acetyltransferase activity is inhibited by anacardic acid derivatives. Histone acetyltransferase that catalyzes histone H4 acetylation at 'Lys-5'- and 'Lys-8' (H4K5ac and H4K8ac) or 'Lys-16' (H4K16ac), depending on the context. Catalytic component of the MSL histone acetyltransferase complex, a multiprotein complex that mediates the majority of histone H4 acetylation at 'Lys-16' (H4K16ac), an epigenetic mark that prevents chromatin compaction. H4K16ac constitutes the only acetylation mark intergenerationally transmitted and regulates key biological processes, such as oogenesis, embryonic stem cell pluripotency, hematopoiesis or glucose metabolism. The MSL complex is required for chromosome stability and genome integrity by maintaining homeostatic levels of H4K16ac. The MSL complex is also involved in gene dosage by promoting up-regulation of genes expressed by the X chromosome. X up-regulation is required to compensate for autosomal biallelic expression. The MSL complex also participates in gene dosage compensation by promoting expression of Tsix non-coding RNA. As part of the NSL histone acetyltransferase complex, catalyzes histone H4 acetylation at 'Lys-5'- and 'Lys-8' (H4K5ac and H4K8ac) at transcription start sites and promotes transcription initiation. The NSL complex also acts as a regulator of gene expression in mitochondria: KAT8 associates with mitochondrial DNA and controls expression of respiratory genes in an acetyltransferase-dependent mechanism. Also functions as an acetyltransferase for non-histone targets, such as ALKBH5, COX17, IRF3, KDM1A/LSD1, LMNA, PAX7 or TP53/p53. Acts as an inhibitor of antiviral immunity by acetylating IRF3, preventing IRF3 recruitment to promoters. Acts as a regulator of asymmetric division in muscle stem cells by mediating acetylation of PAX7. As part of the NSL complex, acetylates TP53/p53 at 'Lys-120'. Acts as a regulator of epithelial-to-mesenchymal transition as part of the NSL complex by mediating acetylation of KDM1A/LSD1. The NSL complex is required for nuclear architecture maintenance by mediating acetylation of LMNA. Promotes mitochondrial integrity by catalyzing acetylation of COX17. In addition to protein acetyltransferase activity, able to mediate protein propionylation. This chain is Histone acetyltransferase KAT8, found in Mus musculus (Mouse).